Consider the following 126-residue polypeptide: UPF0102 protein BH12350 (126 aa).

This sequence belongs to the UPF0102 family.

This Bartonella henselae (strain ATCC 49882 / DSM 28221 / CCUG 30454 / Houston 1) (Rochalimaea henselae) protein is UPF0102 protein BH12350.